Here is a 457-residue protein sequence, read N- to C-terminus: Multidrug resistance protein MdtK (457 aa).

12 helical membrane passes run 11–31 (LLAL…MGFV), 53–73 (IWLP…PVIA), 93–113 (WLAG…GYII), 127–147 (AVGY…FQVA), 160–180 (GMVI…IFIY), 188–208 (LGGV…FIAM), 243–263 (LPIA…ALLV), 276–296 (IALN…AAVT), 314–334 (AART…IFTV), 357–377 (LMLL…GSGI), 387–407 (IFFI…YILA), and 418–438 (PAGF…MMML).

Belongs to the multi antimicrobial extrusion (MATE) (TC 2.A.66.1) family. MdtK subfamily.

It localises to the cell inner membrane. Multidrug efflux pump that functions probably as a Na(+)/drug antiporter. In Citrobacter koseri (strain ATCC BAA-895 / CDC 4225-83 / SGSC4696), this protein is Multidrug resistance protein MdtK.